We begin with the raw amino-acid sequence, 629 residues long: MSLASIRRLAAGAAVIAAASGGAVYLSPSVASSDKGGGPILDSLRRRLGDPTASVPSRSAQESALIAATASDPLDVLVIGGGATGSGVALDAVTRGLRVGLVEREDFSSGTSSRSTKLIHGGVRYLEKAVFNLDYGQLKLVFHALEERKQLIENAPHLCHALPCMTPCFDWFEVIYFWMGLKMYDLVAGPRLLHLSRYYSAKESIELFPTLARKGKDKNLRGTVVYYDGQMNDSRLNVGLACTAALAGAAVLNHAEVVSLITDDATKRIIGARIRNNLTGQEFNSYAKVVVNAAGPFCDSIRKMIDEDTKPMICPSSGVHIVLPDYYSPEGMGLIVPKTKDGRVVFMLPWLGRTVAGTTDSNTSITSLPEPHEDEIQFILDAISDYLNIKVRRTDVLSAWSGIRPLAMDPTAKSTESISRDHVVFEENPGLVTITGGKWTTYRSMAEDAVDAAIKSGQLKPTNECVTQKLQLLGSYGWEPSSFTTLAQQYVRMKKTYGGKVVPGAMDTAAAKHLSHAYGSMADRVATIAQEEGLGKRLAHGHPFLEAEVAYCARHEYCESAVDFIARRCRIAFLDTDAAARALQRVVEILASEHKWDKSRQKQELQKAKEFLETFKSSKNAQFNDGKHN.

A mitochondrion-targeting transit peptide spans 1 to 48 (MSLASIRRLAAGAAVIAAASGGAVYLSPSVASSDKGGGPILDSLRRRL). Position 75–103 (75–103 (DVLVIGGGATGSGVALDAVTRGLRVGLVE)) interacts with FAD.

This sequence belongs to the FAD-dependent glycerol-3-phosphate dehydrogenase family. The cofactor is FAD. In terms of tissue distribution, expressed in germinating seedlings. Also detected in roots, leaves, flowers, developing siliques and germinating seeds.

The protein resides in the mitochondrion inner membrane. The catalysed reaction is a quinone + sn-glycerol 3-phosphate = dihydroxyacetone phosphate + a quinol. It functions in the pathway polyol metabolism; glycerol degradation via glycerol kinase pathway; glycerone phosphate from sn-glycerol 3-phosphate (anaerobic route): step 1/1. Required for glycerol catabolism and involved in NADH/NAD(+) homeostasis. Essential for postgerminative growth and seedling establishment. The chain is Glycerol-3-phosphate dehydrogenase SDP6, mitochondrial from Arabidopsis thaliana (Mouse-ear cress).